Consider the following 639-residue polypeptide: tRNA 5-methylaminomethyl-2-thiouridine biosynthesis bifunctional protein MnmC (639 aa).

Positions 1–228 are tRNA (mnm(5)s(2)U34)-methyltransferase; that stretch reads MSEPIEWLED…KRDNLQATYA (228 aa). Residues 254–639 are FAD-dependent cmnm(5)s(2)U34 oxidoreductase; that stretch reads VGAGLAGAAV…SERWLGYEPQ (386 aa).

This sequence in the N-terminal section; belongs to the methyltransferase superfamily. tRNA (mnm(5)s(2)U34)-methyltransferase family. The protein in the C-terminal section; belongs to the DAO family. It depends on FAD as a cofactor.

It localises to the cytoplasm. The catalysed reaction is 5-aminomethyl-2-thiouridine(34) in tRNA + S-adenosyl-L-methionine = 5-methylaminomethyl-2-thiouridine(34) in tRNA + S-adenosyl-L-homocysteine + H(+). In terms of biological role, catalyzes the last two steps in the biosynthesis of 5-methylaminomethyl-2-thiouridine (mnm(5)s(2)U) at the wobble position (U34) in tRNA. Catalyzes the FAD-dependent demodification of cmnm(5)s(2)U34 to nm(5)s(2)U34, followed by the transfer of a methyl group from S-adenosyl-L-methionine to nm(5)s(2)U34, to form mnm(5)s(2)U34. The protein is tRNA 5-methylaminomethyl-2-thiouridine biosynthesis bifunctional protein MnmC of Acidovorax sp. (strain JS42).